We begin with the raw amino-acid sequence, 1118 residues long: Carbamoyl phosphate synthase arginine-specific large chain (1118 aa).

The carboxyphosphate synthetic domain stretch occupies residues 23–420 (QLVEGVNSVL…AFQKALRQVD (398 aa)). ATP contacts are provided by Arg-150, Arg-190, Gly-196, Gly-197, Lys-227, Leu-229, Glu-234, Gly-260, Val-261, His-262, Gln-303, and Glu-317. Positions 154–346 (ASALKDINIP…LAYTAAKIGL (193 aa)) constitute an ATP-grasp 1 domain. Mg(2+) contacts are provided by Gln-303, Glu-317, and Asn-319. Mn(2+)-binding residues include Gln-303, Glu-317, and Asn-319. The segment at 421–573 (PSLLGFQGST…YTTYNATKND (153 aa)) is oligomerization domain. The interval 574 to 958 (VEFNENGMLV…SYWTAIQSTM (385 aa)) is carbamoyl phosphate synthetic domain. The ATP-grasp 2 domain maps to 698–890 (SSILDSIDVD…FIEIAVKAFL (193 aa)). Positions 734, 773, 775, 780, 805, 806, 807, 808, 848, and 861 each coordinate ATP. Mg(2+) contacts are provided by Gln-848, Glu-861, and Asn-863. Residues Gln-848, Glu-861, and Asn-863 each coordinate Mn(2+). The interval 959 to 1102 (NFHVPLPPSG…KILESHDVIV (144 aa)) is allosteric domain. The region spanning 960 to 1118 (FHVPLPPSGI…WDEFIGFKAY (159 aa)) is the MGS-like domain.

This sequence belongs to the CarB family. In terms of assembly, heterodimer composed of 2 chains; the small (or glutamine) chain promotes the hydrolysis of glutamine to ammonia, which is used by the large (or ammonia) chain to synthesize carbamoyl phosphate. The cofactor is Mg(2+). Mn(2+) is required as a cofactor.

It localises to the cytoplasm. It catalyses the reaction hydrogencarbonate + L-glutamine + 2 ATP + H2O = carbamoyl phosphate + L-glutamate + 2 ADP + phosphate + 2 H(+). The enzyme catalyses hydrogencarbonate + NH4(+) + 2 ATP = carbamoyl phosphate + 2 ADP + phosphate + 2 H(+). Its pathway is amino-acid biosynthesis; L-arginine biosynthesis; carbamoyl phosphate from bicarbonate: step 1/1. In terms of biological role, large subunit of the arginine-specific carbamoyl phosphate synthase (CPSase). CPSase catalyzes the formation of carbamoyl phosphate from the ammonia moiety of glutamine, hydrogencarbonate, and phosphate donated by ATP, constituting the first step of 2 biosynthetic pathways, one leading to arginine and/or urea and the other to pyrimidine nucleotides. The large subunit (synthetase) binds the substrates ammonia (free or transferred from glutamine from the small subunit), hydrogencarbonate and ATP and carries out an ATP-coupled ligase reaction, activating hydrogencarbonate by forming carboxy phosphate which reacts with ammonia to form carbamoyl phosphate. In Saccharomyces cerevisiae (strain ATCC 204508 / S288c) (Baker's yeast), this protein is Carbamoyl phosphate synthase arginine-specific large chain (CPA2).